Reading from the N-terminus, the 653-residue chain is Dual specificity protein kinase shkB (653 aa).

The segment at asparagine 112 to serine 133 is disordered. The region spanning tyrosine 174–leucine 432 is the Protein kinase domain. Residues leucine 180–valine 188 and lysine 201 each bind ATP. Aspartate 298 serves as the catalytic Proton acceptor. The region spanning glycine 534–phenylalanine 625 is the SH2 domain.

Belongs to the protein kinase superfamily. TKL Ser/Thr protein kinase family. SH2 domain-containing protein kinase subfamily.

Its subcellular location is the membrane. It catalyses the reaction L-seryl-[protein] + ATP = O-phospho-L-seryl-[protein] + ADP + H(+). The catalysed reaction is L-threonyl-[protein] + ATP = O-phospho-L-threonyl-[protein] + ADP + H(+). Required for proper chemotaxis and phagocytosis; proper spatiotemporal control of F-actin levels in chemotaxing cells. Negative regulator of the PI3K (phosphatidylinositol 3 kinase) pathway. Predominantly phosphorylates serines and threonines and tyrosines at a lower level. In Dictyostelium discoideum (Social amoeba), this protein is Dual specificity protein kinase shkB (shkB).